Reading from the N-terminus, the 688-residue chain is Phosphoinositide 3-phosphatase (688 aa).

One can recognise a Myotubularin phosphatase domain in the interval 155-637 (SWDIYDPIKE…KKVQWWWQLY (483 aa)). The active-site Phosphocysteine intermediate is Cys-397. A compositionally biased stretch (basic and acidic residues) spans 647–668 (ELRHKRDSVPISVDKKSKEHSN). Positions 647 to 672 (ELRHKRDSVPISVDKKSKEHSNSDGG) are disordered.

The protein belongs to the protein-tyrosine phosphatase family. Non-receptor class myotubularin subfamily.

The protein resides in the cytoplasm. The catalysed reaction is a 1,2-diacyl-sn-glycero-3-phospho-(1D-myo-inositol-3-phosphate) + H2O = a 1,2-diacyl-sn-glycero-3-phospho-(1D-myo-inositol) + phosphate. In terms of biological role, lipid phosphatase which dephosphorylates phosphatidylinositol 3-monophosphate (PI3P). Involved in the control of PI3P-dependent signaling and in the maintenance of endosomal system integrity. This chain is Phosphoinositide 3-phosphatase, found in Saccharomyces cerevisiae (strain ATCC 204508 / S288c) (Baker's yeast).